A 135-amino-acid polypeptide reads, in one-letter code: Large ribosomal subunit protein uL16c (135 aa).

This sequence belongs to the universal ribosomal protein uL16 family. In terms of assembly, part of the 50S ribosomal subunit.

Its subcellular location is the plastid. The protein localises to the chloroplast. This chain is Large ribosomal subunit protein uL16c, found in Cucumis sativus (Cucumber).